A 484-amino-acid chain; its full sequence is Toluene efflux pump outer membrane protein TtgC (484 aa).

A signal peptide spans 1–17; the sequence is MTKSLLSLAVTAFILGG. A lipid anchor (N-palmitoyl cysteine) is attached at Cys18. The S-diacylglycerol cysteine moiety is linked to residue Cys18.

It belongs to the outer membrane factor (OMF) (TC 1.B.17) family.

The protein localises to the cell outer membrane. Functionally, the outer membrane component of a constitutive organic solvent efflux system. Is involved in export of toluene, styrene, m-xylene, propylbenzene and ethylbenzene. Also exports AMP and the antibiotics carbenicillin, nalidixic acid, chloramphenicol and tetracycline. This Pseudomonas putida (strain DOT-T1E) protein is Toluene efflux pump outer membrane protein TtgC (ttgC).